The primary structure comprises 130 residues: Small ribosomal subunit protein uS11 (130 aa).

It belongs to the universal ribosomal protein uS11 family. As to quaternary structure, part of the 30S ribosomal subunit.

In terms of biological role, located on the platform of the 30S subunit. This is Small ribosomal subunit protein uS11 from Ignicoccus hospitalis (strain KIN4/I / DSM 18386 / JCM 14125).